We begin with the raw amino-acid sequence, 204 residues long: 3-isopropylmalate dehydratase small subunit (204 aa).

Belongs to the LeuD family. LeuD type 1 subfamily. Heterodimer of LeuC and LeuD.

The enzyme catalyses (2R,3S)-3-isopropylmalate = (2S)-2-isopropylmalate. It participates in amino-acid biosynthesis; L-leucine biosynthesis; L-leucine from 3-methyl-2-oxobutanoate: step 2/4. Catalyzes the isomerization between 2-isopropylmalate and 3-isopropylmalate, via the formation of 2-isopropylmaleate. This chain is 3-isopropylmalate dehydratase small subunit, found in Psychromonas ingrahamii (strain DSM 17664 / CCUG 51855 / 37).